A 169-amino-acid polypeptide reads, in one-letter code: Large ribosomal subunit protein uL10 (169 aa).

It belongs to the universal ribosomal protein uL10 family. In terms of assembly, part of the ribosomal stalk of the 50S ribosomal subunit. The N-terminus interacts with L11 and the large rRNA to form the base of the stalk. The C-terminus forms an elongated spine to which L12 dimers bind in a sequential fashion forming a multimeric L10(L12)X complex.

Forms part of the ribosomal stalk, playing a central role in the interaction of the ribosome with GTP-bound translation factors. The sequence is that of Large ribosomal subunit protein uL10 from Orientia tsutsugamushi (strain Boryong) (Rickettsia tsutsugamushi).